A 327-amino-acid chain; its full sequence is Microtubule-associated protein RP/EB family member 2 (327 aa).

The segment at methionine 1–aspartate 21 is disordered. The residue at position 2 (proline 2) is an N-acetylalanine. Position 9 is a phosphoserine (serine 9). The Calponin-homology (CH) domain maps to threonine 57–aspartate 159. Phosphotyrosine is present on tyrosine 167. Disordered regions lie at residues glutamate 171–leucine 240 and alanine 299–tyrosine 327. The interval glutamine 187–tyrosine 327 is DCTN1-binding. Low complexity predominate over residues serine 200–serine 234. Residues serine 219 and serine 236 each carry the phosphoserine modification. The 71-residue stretch at serine 236 to histidine 306 folds into the EB1 C-terminal domain. The APC-binding stretch occupies residues glutamate 259–glutamate 302. Over residues serine 300–histidine 317 the composition is skewed to basic and acidic residues. Residues glutamate 318–tyrosine 327 are compositionally biased toward low complexity.

Belongs to the MAPRE family. In terms of assembly, interacts with DCTN1. Interacts with APC (via C-terminal). Interacts with monomeric and polymerized tubulin. Interacts with SLAIN1. Interacts (via the N-terminal region) with BAG1. Interacts with ASB14. Interacts with HAX1; this interaction is essential for epidermal cell migration. Post-translationally, phosphorylated at Ser-236 by CK2 leading to enhanced cell adhesion. Phosphorylated by CDK1 and AURKB during mitosis reduces the binding affinity of MAPRE2 for microtubules. In terms of processing, ubiquitinated in an ASB14-dependent manner; leading to proteasomal degradation. In terms of tissue distribution, expressed in different tumor cell lines. Up-regulated in activated B- and T-lymphocytes.

It localises to the cytoplasm. It is found in the cytoskeleton. Its function is as follows. Adapter protein that is involved in microtubule polymerization, and spindle function by stabilizing microtubules and anchoring them at centrosomes. Therefore, ensures mitotic progression and genome stability. Acts as a central regulator of microtubule reorganization in apico-basal epithelial differentiation. Plays a role during oocyte meiosis by regulating microtubule dynamics. Participates in neurite growth by interacting with plexin B3/PLXNB3 and microtubule reorganization during apico-basal epithelial differentiation. Also plays an essential role for cell migration and focal adhesion dynamics. Mechanistically, recruits HAX1 to microtubules in order to regulate focal adhesion dynamics. This is Microtubule-associated protein RP/EB family member 2 (MAPRE2) from Homo sapiens (Human).